A 185-amino-acid chain; its full sequence is Adenine phosphoribosyltransferase (185 aa).

This sequence belongs to the purine/pyrimidine phosphoribosyltransferase family. In terms of assembly, homodimer.

It localises to the cytoplasm. The enzyme catalyses AMP + diphosphate = 5-phospho-alpha-D-ribose 1-diphosphate + adenine. It participates in purine metabolism; AMP biosynthesis via salvage pathway; AMP from adenine: step 1/1. Functionally, catalyzes a salvage reaction resulting in the formation of AMP, that is energically less costly than de novo synthesis. The protein is Adenine phosphoribosyltransferase of Kineococcus radiotolerans (strain ATCC BAA-149 / DSM 14245 / SRS30216).